The following is a 151-amino-acid chain: Globin CTT-X (151 aa).

The Globin domain maps to 6-150 (TLDAHEVEQV…AFSVIFEVLE (145 aa)). 2 residues coordinate heme b: His-64 and His-99.

Belongs to the globin family. Homodimer.

This chain is Globin CTT-X (CTT-10), found in Chironomus thummi thummi (Midge).